The chain runs to 196 residues: Glycerol-3-phosphate acyltransferase (196 aa).

A run of 4 helical transmembrane segments spans residues 5 to 25 (GLIA…MILT), 70 to 90 (VVIA…LGAF), 111 to 131 (IGVL…IWLL), and 152 to 172 (LLLW…LTVL).

Belongs to the PlsY family. In terms of assembly, probably interacts with PlsX.

It is found in the cell inner membrane. It catalyses the reaction an acyl phosphate + sn-glycerol 3-phosphate = a 1-acyl-sn-glycero-3-phosphate + phosphate. The protein operates within lipid metabolism; phospholipid metabolism. Functionally, catalyzes the transfer of an acyl group from acyl-phosphate (acyl-PO(4)) to glycerol-3-phosphate (G3P) to form lysophosphatidic acid (LPA). This enzyme utilizes acyl-phosphate as fatty acyl donor, but not acyl-CoA or acyl-ACP. This chain is Glycerol-3-phosphate acyltransferase, found in Nitrobacter winogradskyi (strain ATCC 25391 / DSM 10237 / CIP 104748 / NCIMB 11846 / Nb-255).